A 435-amino-acid polypeptide reads, in one-letter code: Glutamyl-tRNA reductase (435 aa).

Substrate is bound by residues 49 to 52 (TCNR), S109, 114 to 116 (ETQ), and Q120. C50 serves as the catalytic Nucleophile. 189 to 194 (GAGEMS) lines the NADP(+) pocket.

The protein belongs to the glutamyl-tRNA reductase family. In terms of assembly, homodimer.

The catalysed reaction is (S)-4-amino-5-oxopentanoate + tRNA(Glu) + NADP(+) = L-glutamyl-tRNA(Glu) + NADPH + H(+). The protein operates within porphyrin-containing compound metabolism; protoporphyrin-IX biosynthesis; 5-aminolevulinate from L-glutamyl-tRNA(Glu): step 1/2. In terms of biological role, catalyzes the NADPH-dependent reduction of glutamyl-tRNA(Glu) to glutamate 1-semialdehyde (GSA). The polypeptide is Glutamyl-tRNA reductase (Listeria monocytogenes serovar 1/2a (strain ATCC BAA-679 / EGD-e)).